Here is a 184-residue protein sequence, read N- to C-terminus: NADH-quinone oxidoreductase subunit B (184 aa).

[4Fe-4S] cluster is bound by residues Cys-63, Cys-64, Cys-128, and Cys-158.

This sequence belongs to the complex I 20 kDa subunit family. NDH-1 is composed of 14 different subunits. Subunits NuoB, C, D, E, F, and G constitute the peripheral sector of the complex. It depends on [4Fe-4S] cluster as a cofactor.

It localises to the cell inner membrane. The enzyme catalyses a quinone + NADH + 5 H(+)(in) = a quinol + NAD(+) + 4 H(+)(out). In terms of biological role, NDH-1 shuttles electrons from NADH, via FMN and iron-sulfur (Fe-S) centers, to quinones in the respiratory chain. The immediate electron acceptor for the enzyme in this species is believed to be ubiquinone. Couples the redox reaction to proton translocation (for every two electrons transferred, four hydrogen ions are translocated across the cytoplasmic membrane), and thus conserves the redox energy in a proton gradient. The sequence is that of NADH-quinone oxidoreductase subunit B from Xylella fastidiosa (strain M23).